Reading from the N-terminus, the 187-residue chain is Small ribosomal subunit protein uS5 (187 aa).

Residues 1–20 (MAERENRRDRRDDRSREETP) are disordered. The 64-residue stretch at 22–85 (FADRLVAINR…EQAKRQMIRV (64 aa)) folds into the S5 DRBM domain. Residues 154–174 (DGLKRESSPRQVAQRRGKKVA) form a disordered region.

The protein belongs to the universal ribosomal protein uS5 family. Part of the 30S ribosomal subunit. Contacts proteins S4 and S8.

Functionally, with S4 and S12 plays an important role in translational accuracy. Located at the back of the 30S subunit body where it stabilizes the conformation of the head with respect to the body. This is Small ribosomal subunit protein uS5 from Cereibacter sphaeroides (strain ATCC 17025 / ATH 2.4.3) (Rhodobacter sphaeroides).